We begin with the raw amino-acid sequence, 2946 residues long: Neurobeachin (2946 aa).

A disordered region spans residues glutamate 971–lysine 995. Polar residues predominate over residues asparagine 980–glycine 993. Phosphoserine occurs at positions 1011 and 1014. The WD 1 repeat unit spans residues threonine 1326–aspartate 1368. Disordered stretches follow at residues glutamine 1490 to isoleucine 1531, threonine 1651 to serine 1675, valine 1711 to serine 1731, and glycine 1841 to alanine 1860. Residues serine 1497 to serine 1517 are compositionally biased toward polar residues. Serine 1529 carries the post-translational modification Phosphoserine. Phosphoserine occurs at positions 1714 and 1717. Residues glutamate 1716–serine 1731 are compositionally biased toward polar residues. Residues serine 1845 to serine 1855 show a composition bias toward low complexity. The residue at position 2138 (serine 2138) is a Phosphoserine. In terms of domain architecture, BEACH-type PH spans asparagine 2147–proline 2255. In terms of domain architecture, BEACH spans alanine 2274 to arginine 2563. Serine 2575 bears the Phosphoserine mark. 4 WD repeats span residues glycine 2718 to glycine 2761, glycine 2778 to glutamate 2818, glutamate 2860 to isoleucine 2899, and glycine 2902 to glutamate 2941.

It belongs to the WD repeat neurobeachin family. Interacts with RII subunit of PKA. Predominant in many brain structures. Also expressed at medium levels in spleen, thymus, prostate, testis and ovary. Low level expression is seen in heart, kidney, pancreas, skeletal muscle and intestine.

Its subcellular location is the cytoplasm. It is found in the membrane. Its function is as follows. Binds to type II regulatory subunits of protein kinase A and anchors/targets them to the membrane. May anchor the kinase to cytoskeletal and/or organelle-associated proteins. In Homo sapiens (Human), this protein is Neurobeachin.